A 260-amino-acid chain; its full sequence is Putative sgc region transcriptional regulator (260 aa).

An HTH deoR-type domain is found at 5-61 (RPDRIKQMLHYLWQHRHLSTQQAMELFGYAEATVRRDFQYIVNQYPGMIRGHGCLDF). The H-T-H motif DNA-binding region spans 22-41 (LSTQQAMELFGYAEATVRRD).

Functionally, putative transcriptional regulator for the sgcREAQCX region. This is Putative sgc region transcriptional regulator (sgcR) from Escherichia coli (strain K12).